Reading from the N-terminus, the 34-residue chain is Peptide 9797 (34 aa).

As to expression, expressed by the venom gland.

Its subcellular location is the secreted. In Tityus stigmurus (Brazilian scorpion), this protein is Peptide 9797.